The chain runs to 132 residues: uncharacterized protein (132 aa).

Residues 66-86 (LPPMLLVLAALFVKGLIPLVL) form a helical membrane-spanning segment.

The protein localises to the membrane. This is an uncharacterized protein from Saccharomyces cerevisiae (strain ATCC 204508 / S288c) (Baker's yeast).